Here is a 673-residue protein sequence, read N- to C-terminus: UvrABC system protein B (673 aa).

The 158-residue stretch at 26-183 folds into the Helicase ATP-binding domain; it reads ANFEAGLAKQ…RHLTDLQYTR (158 aa). 39-46 is a binding site for ATP; the sequence is GVTGSGKT. The Beta-hairpin motif lies at 92–115; sequence YYDYYQPEAYVPSSDTFIEKDSSI. Positions 431–597 constitute a Helicase C-terminal domain; the sequence is QVDDLMSEIH…SVERPISDIM (167 aa). A disordered region spans residues 601-631; it reads REDAAEKKSGKGRSKSRQVAEETPDYRAMKP. Positions 618-630 are enriched in basic and acidic residues; that stretch reads QVAEETPDYRAMK. Residues 635-670 form the UVR domain; it reads AGKLKSLEQKMYQHAKDLEFEAAAQIRDQIQKLKTA.

This sequence belongs to the UvrB family. In terms of assembly, forms a heterotetramer with UvrA during the search for lesions. Interacts with UvrC in an incision complex.

It is found in the cytoplasm. In terms of biological role, the UvrABC repair system catalyzes the recognition and processing of DNA lesions. A damage recognition complex composed of 2 UvrA and 2 UvrB subunits scans DNA for abnormalities. Upon binding of the UvrA(2)B(2) complex to a putative damaged site, the DNA wraps around one UvrB monomer. DNA wrap is dependent on ATP binding by UvrB and probably causes local melting of the DNA helix, facilitating insertion of UvrB beta-hairpin between the DNA strands. Then UvrB probes one DNA strand for the presence of a lesion. If a lesion is found the UvrA subunits dissociate and the UvrB-DNA preincision complex is formed. This complex is subsequently bound by UvrC and the second UvrB is released. If no lesion is found, the DNA wraps around the other UvrB subunit that will check the other stand for damage. This is UvrABC system protein B from Xanthomonas oryzae pv. oryzae (strain MAFF 311018).